Consider the following 453-residue polypeptide: Chromosomal replication initiator protein DnaA (453 aa).

The domain I, interacts with DnaA modulators stretch occupies residues 1 to 75; that stretch reads MSENMEELWS…SLKKISGKQL (75 aa). Positions 75 to 114 are domain II; it reads LKIKFLLPGEKIKMEEQNNENEEKPESTSKKSSQGSEHTT. Basic and acidic residues predominate over residues 87–103; the sequence is KMEEQNNENEEKPESTS. Residues 87–112 are disordered; that stretch reads KMEEQNNENEEKPESTSKKSSQGSEH. Residues 115-331 form a domain III, AAA+ region region; it reads WLNPKYTFDT…GGLIRVIAYS (217 aa). Residues G159, G161, K162, and T163 each contribute to the ATP site. Residues 332–453 are domain IV, binds dsDNA; that stretch reads SMANKKITKE…DEIKNLLHGD (122 aa).

It belongs to the DnaA family. Oligomerizes as a right-handed, spiral filament on DNA at oriC.

It is found in the cytoplasm. Its function is as follows. Plays an essential role in the initiation and regulation of chromosomal replication. ATP-DnaA binds to the origin of replication (oriC) to initiate formation of the DNA replication initiation complex once per cell cycle. Binds the DnaA box (a 9 base pair repeat at the origin) and separates the double-stranded (ds)DNA. Forms a right-handed helical filament on oriC DNA; dsDNA binds to the exterior of the filament while single-stranded (ss)DNA is stabiized in the filament's interior. The ATP-DnaA-oriC complex binds and stabilizes one strand of the AT-rich DNA unwinding element (DUE), permitting loading of DNA polymerase. After initiation quickly degrades to an ADP-DnaA complex that is not apt for DNA replication. Binds acidic phospholipids. This Natranaerobius thermophilus (strain ATCC BAA-1301 / DSM 18059 / JW/NM-WN-LF) protein is Chromosomal replication initiator protein DnaA.